The chain runs to 283 residues: Adenylate kinase 2, chloroplastic (283 aa).

The N-terminal 59 residues, 1–59 (MTGCVNSISPPPVTLYRHRASPSRSSFSLSGDALHSLYRHRRVSRSPSIIAPKFQIVAA), are a transit peptide targeting the chloroplast. 74-79 (ASGKGT) contacts ATP. The interval 94–123 (SAGDLLRAEIASGSENGRRAKEHMEKGQLV) is NMP. AMP-binding positions include arginine 100, 121–123 (QLV), 150–153 (GYPR), and glutamine 157. The LID stretch occupies residues 187–220 (GRRLDPVTGKIYHLKYSPPETEEIAVRLTQRFDD). Arginine 188 is a binding site for ATP. 2 residues coordinate AMP: arginine 217 and arginine 228.

The protein belongs to the adenylate kinase family. Monomer.

It localises to the plastid. The protein resides in the chloroplast stroma. The enzyme catalyses AMP + ATP = 2 ADP. Catalyzes the reversible transfer of the terminal phosphate group between ATP and AMP. Plays an important role in cellular energy homeostasis and in adenine nucleotide metabolism. Plays a major role in the equilibration of adenylates and de novo synthesis of ADP in the plastid stroma. This chain is Adenylate kinase 2, chloroplastic, found in Arabidopsis thaliana (Mouse-ear cress).